A 198-amino-acid chain; its full sequence is Dermorphin-2 (198 aa).

An N-terminal signal peptide occupies residues 1–20; that stretch reads MSFLKKSLLLILFLGLVSLS. Positions 21 to 45 are excised as a propeptide; it reads VCKEEKRVSEEENENEENHEEGSEM. Positions 24 to 198 are disordered; that stretch reads EEKRVSEEEN…AFGYPSGEAK (175 aa). A49 bears the D-alanine (Ala) mark. Serine amide is present on S54. Positions 56-65 are enriched in basic and acidic residues; sequence EAKKIKRESE. Positions 56 to 80 are excised as a propeptide; sequence EAKKIKRESEEEKEIEENHEEGSEM. Residue A84 is modified to D-alanine (Ala). Position 89 is a serine amide (S89). A propeptide spanning residues 91-115 is cleaved from the precursor; it reads EAKKIKRESEEENENEENHEEGSEM. The span at 100–109 shows a compositional bias: acidic residues; the sequence is EEENENEENH. A119 carries the D-alanine (Ala) modification. Serine amide is present on S124. Residues 126–135 show a composition bias toward basic and acidic residues; sequence EAKKIKRESE. Residues 126–150 constitute a propeptide that is removed on maturation; it reads EAKKIKRESEEEKEIEENHEEGSEM. A154 bears the D-alanine (Ala) mark. S159 is subject to Serine amide. A propeptide spanning residues 161 to 185 is cleaved from the precursor; the sequence is EAKKIKRESEEENENEENHEEGSEM. A compositionally biased stretch (acidic residues) spans 170–179; the sequence is EEENENEENH. A189 is subject to D-alanine (Ala). At S194 the chain carries Serine amide. Positions 196-198 are excised as a propeptide; sequence EAK.

This sequence belongs to the frog skin active peptide (FSAP) family. Dermorphin subfamily. As to expression, expressed by the skin glands.

It localises to the secreted. Functionally, dermorphin has a very potent opiate-like activity. It has high affinity and selectivity for mu-type opioid receptors. The sequence is that of Dermorphin-2 from Phyllomedusa sauvagei (Sauvage's leaf frog).